A 161-amino-acid chain; its full sequence is Allophycocyanin beta chain (161 aa).

Asn-71 bears the N4-methylasparagine mark. Residue Cys-81 coordinates (2R,3E)-phycocyanobilin.

This sequence belongs to the phycobiliprotein family. Heterodimer of an alpha and a beta chain. Post-translationally, contains one covalently linked phycocyanobilin chromophore.

It is found in the cellular thylakoid membrane. Functionally, light-harvesting photosynthetic bile pigment-protein from the phycobiliprotein complex. Allophycocyanin has a maximum absorption at approximately 650 nanometers. The polypeptide is Allophycocyanin beta chain (apcB) (Thermosynechococcus vestitus (strain NIES-2133 / IAM M-273 / BP-1)).